We begin with the raw amino-acid sequence, 494 residues long: Flavin-containing monooxygenase ustF2 (494 aa).

An N-terminal signal peptide occupies residues 1-21; that stretch reads MANPQTTRVAVVGAGISGVLA. Residue 13 to 18 coordinates FAD; the sequence is GAGISG. Residues 73-93 form a disordered region; it reads EPSYPAMKPSKADPPATNEQE. NADP(+) is bound at residue 250-255; the sequence is GGGVSS. The N-linked (GlcNAc...) asparagine glycan is linked to Asn459.

It belongs to the FMO family.

The protein operates within mycotoxin biosynthesis. Functionally, flavin-containing monooxygenase; part of the gene cluster that mediates the biosynthesis of the secondary metabolite ustiloxin B, an antimitotic tetrapeptide. First, ustA is processed by the subtilisin-like endoprotease Kex2 that is outside the ustiloxin B gene cluster, at the C-terminal side of Arg-Lys, after transfer to Golgi apparatus through the endoplasmic reticulum (ER). Cleavage by KEX2 generates 16 peptides YAIG-I to YAIG-XVI. To process the precursor peptide further, at least two peptidases are necessary to cleave the N-terminal and C-terminal sides of the Tyr-Ala-Ile-Gly core peptide which serves as backbone for the synthesis of ustiloxin B, through cyclization and modification of the tyrosine with a non-protein coding amino acid, norvaline. One of the two peptidases must be the serine peptidase ustP; and the other pepdidase is probably ustH. Macrocyclization of the core peptide derived from ustA requires the tyrosinase ustQ, as well as the homologous oxidases ustYa and ustYb, and leads to the production of the first cyclization product N-desmethylustiloxin F. For the formation of N-desmethylustiloxin F, three oxidation steps are required, hydroxylation at the benzylic position, hydroxylation at either the aromatic ring of Tyr or beta-position of Ile, and oxidative cyclization. UstQ may catalyze the oxidation of a phenol moiety, whereas the ustYa and ustYb are most likely responsible for the remaining two-step oxidations. N-desmethylustiloxin F is then methylated by ustM to yield ustiloxin F which in turn substrate of the cytochrome P450 monooxygenase ustC which catalyzes the formation of S-deoxyustiloxin H. The flavoprotein monooxygenases ustF1 and ustF2 then participate in the modification of the side chain of S-deoxyustiloxin H, leading to the synthesis of an oxime intermediate, via ustiloxin H. Finally, carboxylative dehydration performed by the cysteine desulfurase-like protein ustD yields ustiloxin B. The protein is Flavin-containing monooxygenase ustF2 of Aspergillus flavus (strain ATCC 200026 / FGSC A1120 / IAM 13836 / NRRL 3357 / JCM 12722 / SRRC 167).